We begin with the raw amino-acid sequence, 480 residues long: Probable WRKY transcription factor 61 (480 aa).

Positions 30–108 (NQLMAKHNEP…RNYDDNEKSS (79 aa)) are disordered. Basic and acidic residues-rich tracts occupy residues 57–66 (REKVNEREEL) and 84–106 (NKEE…DNEK). Residues 185–251 (CETPTMNDGC…YEGTHNHPLP (67 aa)) constitute a DNA-binding region (WRKY).

The protein resides in the nucleus. In terms of biological role, transcription factor. Interacts specifically with the W box (5'-(T)TGAC[CT]-3'), a frequently occurring elicitor-responsive cis-acting element. In Arabidopsis thaliana (Mouse-ear cress), this protein is Probable WRKY transcription factor 61 (WRKY61).